The chain runs to 360 residues: Insulin gene enhancer protein ISL-2 (360 aa).

LIM zinc-binding domains follow at residues 25–86 (AMCV…RLFG) and 87–149 (IKCA…LLER). The segment at 151 to 177 (AAGSPRSPGPLPGTPPGLHLPDAGSGQ) is disordered. Phosphoserine is present on residues serine 154 and serine 157. Residues 192-251 (TTRVRTVLNEKQLHTLRTCYAANPRPDALMKEQLVEMTGLSPRVIRVWFQNKRCKDKKKS) constitute a DNA-binding region (homeobox). An LIM-binding domain (LID) region spans residues 273–302 (GTLLVAGSPSAHENAVQGSAVEVQTYQPPW). Serine 280 is modified (phosphoserine). Residues 328-337 (SGSLGNSSGS) are compositionally biased toward low complexity. The interval 328 to 360 (SGSLGNSSGSDVTSLSSQLPDTPNSMVPSPVET) is disordered. Positions 338–360 (DVTSLSSQLPDTPNSMVPSPVET) are enriched in polar residues.

In terms of assembly, interacts with LHX4.

It is found in the nucleus. Its function is as follows. Transcriptional factor that defines subclasses of motoneurons that segregate into columns in the spinal cord and select distinct axon pathways. This chain is Insulin gene enhancer protein ISL-2 (Isl2), found in Rattus norvegicus (Rat).